Consider the following 703-residue polypeptide: Meiotic coiled-coil protein 2 (703 aa).

2 stretches are compositionally biased toward polar residues: residues 1–19 (MQSI…SISE) and 245–258 (TNVR…STPL). 3 disordered regions span residues 1–29 (MQSI…SELN), 245–265 (TNVR…DVDL), and 284–309 (ASTN…RSSS). One can recognise a PUM-HD domain in the interval 331–686 (NPSVIPESTS…KVAYLVEKWN (356 aa)). Pumilio repeat units follow at residues 361–396 (NVII…NIVD), 397–432 (SIIS…QMGS), 433–468 (AMLG…AMMD), 469–504 (ELFL…NVMN), 509–544 (ALRG…ECIE), 545–580 (EIIF…RVID), 581–616 (ALLN…LYLK), and 625–660 (RTRQ…LVIT).

The polypeptide is Meiotic coiled-coil protein 2 (mcp2) (Schizosaccharomyces pombe (strain 972 / ATCC 24843) (Fission yeast)).